Here is a 426-residue protein sequence, read N- to C-terminus: Histidine--tRNA ligase (426 aa).

It belongs to the class-II aminoacyl-tRNA synthetase family. Homodimer.

It localises to the cytoplasm. It catalyses the reaction tRNA(His) + L-histidine + ATP = L-histidyl-tRNA(His) + AMP + diphosphate + H(+). This is Histidine--tRNA ligase from Prochlorococcus marinus (strain MIT 9312).